A 329-amino-acid polypeptide reads, in one-letter code: 4-hydroxy-3-methylbut-2-enyl diphosphate reductase 1 (329 aa).

Position 29 (Cys-29) interacts with [4Fe-4S] cluster. The (2E)-4-hydroxy-3-methylbut-2-enyl diphosphate site is built by His-58 and His-95. Dimethylallyl diphosphate-binding residues include His-58 and His-95. Isopentenyl diphosphate contacts are provided by His-58 and His-95. Position 117 (Cys-117) interacts with [4Fe-4S] cluster. (2E)-4-hydroxy-3-methylbut-2-enyl diphosphate is bound at residue His-145. His-145 is a binding site for dimethylallyl diphosphate. His-145 contacts isopentenyl diphosphate. Glu-147 serves as the catalytic Proton donor. Thr-185 provides a ligand contact to (2E)-4-hydroxy-3-methylbut-2-enyl diphosphate. Cys-215 is a [4Fe-4S] cluster binding site. Ser-243, Ser-244, Asn-245, and Ser-287 together coordinate (2E)-4-hydroxy-3-methylbut-2-enyl diphosphate. Dimethylallyl diphosphate is bound by residues Ser-243, Ser-244, Asn-245, and Ser-287. 4 residues coordinate isopentenyl diphosphate: Ser-243, Ser-244, Asn-245, and Ser-287.

It belongs to the IspH family. It depends on [4Fe-4S] cluster as a cofactor.

It carries out the reaction isopentenyl diphosphate + 2 oxidized [2Fe-2S]-[ferredoxin] + H2O = (2E)-4-hydroxy-3-methylbut-2-enyl diphosphate + 2 reduced [2Fe-2S]-[ferredoxin] + 2 H(+). The enzyme catalyses dimethylallyl diphosphate + 2 oxidized [2Fe-2S]-[ferredoxin] + H2O = (2E)-4-hydroxy-3-methylbut-2-enyl diphosphate + 2 reduced [2Fe-2S]-[ferredoxin] + 2 H(+). It participates in isoprenoid biosynthesis; dimethylallyl diphosphate biosynthesis; dimethylallyl diphosphate from (2E)-4-hydroxy-3-methylbutenyl diphosphate: step 1/1. It functions in the pathway isoprenoid biosynthesis; isopentenyl diphosphate biosynthesis via DXP pathway; isopentenyl diphosphate from 1-deoxy-D-xylulose 5-phosphate: step 6/6. In terms of biological role, catalyzes the conversion of 1-hydroxy-2-methyl-2-(E)-butenyl 4-diphosphate (HMBPP) into a mixture of isopentenyl diphosphate (IPP) and dimethylallyl diphosphate (DMAPP). Acts in the terminal step of the DOXP/MEP pathway for isoprenoid precursor biosynthesis. The sequence is that of 4-hydroxy-3-methylbut-2-enyl diphosphate reductase 1 from Mycobacterium tuberculosis (strain CDC 1551 / Oshkosh).